The chain runs to 86 residues: Small ribosomal subunit protein uS17 (86 aa).

The protein belongs to the universal ribosomal protein uS17 family. As to quaternary structure, part of the 30S ribosomal subunit.

Functionally, one of the primary rRNA binding proteins, it binds specifically to the 5'-end of 16S ribosomal RNA. In Bifidobacterium adolescentis (strain ATCC 15703 / DSM 20083 / NCTC 11814 / E194a), this protein is Small ribosomal subunit protein uS17.